The sequence spans 646 residues: Elongation factor 4 (646 aa).

Residues alanine 42 to glutamine 227 form the tr-type G domain. GTP contacts are provided by residues aspartate 54 to threonine 59 and asparagine 174 to aspartate 177.

It belongs to the TRAFAC class translation factor GTPase superfamily. Classic translation factor GTPase family. LepA subfamily.

The protein resides in the cell membrane. It carries out the reaction GTP + H2O = GDP + phosphate + H(+). In terms of biological role, required for accurate and efficient protein synthesis under certain stress conditions. May act as a fidelity factor of the translation reaction, by catalyzing a one-codon backward translocation of tRNAs on improperly translocated ribosomes. Back-translocation proceeds from a post-translocation (POST) complex to a pre-translocation (PRE) complex, thus giving elongation factor G a second chance to translocate the tRNAs correctly. Binds to ribosomes in a GTP-dependent manner. In Mycobacterium leprae (strain Br4923), this protein is Elongation factor 4.